A 205-amino-acid polypeptide reads, in one-letter code: Methylthioribulose-1-phosphate dehydratase (205 aa).

2 residues coordinate Zn(2+): H96 and H98.

This sequence belongs to the aldolase class II family. MtnB subfamily. The cofactor is Zn(2+).

The catalysed reaction is 5-(methylsulfanyl)-D-ribulose 1-phosphate = 5-methylsulfanyl-2,3-dioxopentyl phosphate + H2O. It functions in the pathway amino-acid biosynthesis; L-methionine biosynthesis via salvage pathway; L-methionine from S-methyl-5-thio-alpha-D-ribose 1-phosphate: step 2/6. Functionally, catalyzes the dehydration of methylthioribulose-1-phosphate (MTRu-1-P) into 2,3-diketo-5-methylthiopentyl-1-phosphate (DK-MTP-1-P). The sequence is that of Methylthioribulose-1-phosphate dehydratase from Pseudomonas aeruginosa (strain UCBPP-PA14).